The following is a 603-amino-acid chain: UvrABC system protein C (603 aa).

The GIY-YIG domain maps to 13–92 (NGPGVYLMKD…IRKHKPRYNI (80 aa)). Residues 202 to 237 (NDLLQKIKEQMAAASERQEYELAARLRDRMFAIQAT) enclose the UVR domain.

The protein belongs to the UvrC family. As to quaternary structure, interacts with UvrB in an incision complex.

Its subcellular location is the cytoplasm. Its function is as follows. The UvrABC repair system catalyzes the recognition and processing of DNA lesions. UvrC both incises the 5' and 3' sides of the lesion. The N-terminal half is responsible for the 3' incision and the C-terminal half is responsible for the 5' incision. This Desulfatibacillum aliphaticivorans protein is UvrABC system protein C.